Reading from the N-terminus, the 264-residue chain is Thymidylate synthase (264 aa).

Arg-21 contributes to the dUMP binding site. Residue His-51 participates in (6R)-5,10-methylene-5,6,7,8-tetrahydrofolate binding. 126-127 (RR) lines the dUMP pocket. Cys-146 serves as the catalytic Nucleophile. Residues 166 to 169 (RSCD), Asn-177, and 207 to 209 (HLY) contribute to the dUMP site. A (6R)-5,10-methylene-5,6,7,8-tetrahydrofolate-binding site is contributed by Asp-169. Ala-263 provides a ligand contact to (6R)-5,10-methylene-5,6,7,8-tetrahydrofolate.

It belongs to the thymidylate synthase family. Bacterial-type ThyA subfamily. In terms of assembly, homodimer.

It localises to the cytoplasm. It catalyses the reaction dUMP + (6R)-5,10-methylene-5,6,7,8-tetrahydrofolate = 7,8-dihydrofolate + dTMP. It functions in the pathway pyrimidine metabolism; dTTP biosynthesis. Its function is as follows. Catalyzes the reductive methylation of 2'-deoxyuridine-5'-monophosphate (dUMP) to 2'-deoxythymidine-5'-monophosphate (dTMP) while utilizing 5,10-methylenetetrahydrofolate (mTHF) as the methyl donor and reductant in the reaction, yielding dihydrofolate (DHF) as a by-product. This enzymatic reaction provides an intracellular de novo source of dTMP, an essential precursor for DNA biosynthesis. In Buchnera aphidicola subsp. Baizongia pistaciae (strain Bp), this protein is Thymidylate synthase.